The primary structure comprises 758 residues: UPF0313 protein CV_1738 (758 aa).

A Radical SAM core domain is found at 377–642; the sequence is AWEMIKYSVN…VDVVRDGYRR (266 aa). 3 residues coordinate [4Fe-4S] cluster: Cys-391, Cys-395, and Cys-398. The tract at residues 698–758 is disordered; it reads GAPMNRGKSP…KPGGKTSRSR (61 aa). A compositionally biased stretch (gly residues) spans 727–737; that stretch reads RGQGGQGGRPG.

It belongs to the UPF0313 family. The cofactor is [4Fe-4S] cluster.

In Chromobacterium violaceum (strain ATCC 12472 / DSM 30191 / JCM 1249 / CCUG 213 / NBRC 12614 / NCIMB 9131 / NCTC 9757 / MK), this protein is UPF0313 protein CV_1738.